Consider the following 449-residue polypeptide: Pectate lyase L (449 aa).

Residues methionine 1 to serine 26 form the signal peptide. Cysteine 27 carries the N-palmitoyl cysteine lipid modification. Cysteine 27 is lipidated: S-diacylglycerol cysteine. PbH1 repeat units lie at residues glycine 158–glycine 179, glycine 180–arginine 202, proline 213–leucine 242, glycine 245–serine 267, isoleucine 274–glycine 308, proline 336–lysine 358, and glycine 359–asparagine 391. 4 residues coordinate Ca(2+): aspartate 236, aspartate 260, aspartate 261, and aspartate 264. The Proton acceptor role is filled by lysine 305.

Belongs to the polysaccharide lyase 9 family. Ca(2+) serves as cofactor.

It localises to the secreted. The enzyme catalyses Eliminative cleavage of (1-&gt;4)-alpha-D-galacturonan to give oligosaccharides with 4-deoxy-alpha-D-galact-4-enuronosyl groups at their non-reducing ends.. Activated in presence of the surfactant polysorbate 20, while inhibited in the presence of polysorbate 40, polysorbate 60, polysorbate 80, Triton X-100 and sodium dodecyl sulfate. Inhibited by the metal chelator ethylenediaminetetraacetic acid (EDTA). Inhibited by iron and cobalt ions. Presents an endo-cleaving activity on the homogalacturonan (HG) region in pectin with a preference for low- or unmethylated pectin. In Paenibacillus polymyxa (strain SC2) (Bacillus polymyxa), this protein is Pectate lyase L.